The primary structure comprises 320 residues: Acetyl-coenzyme A carboxylase carboxyl transferase subunit alpha (320 aa).

Positions 41-295 (RIEEKAGQAL…GEAIAQAFDE (255 aa)) constitute a CoA carboxyltransferase C-terminal domain.

Belongs to the AccA family. Acetyl-CoA carboxylase is a heterohexamer composed of biotin carboxyl carrier protein (AccB), biotin carboxylase (AccC) and two subunits each of ACCase subunit alpha (AccA) and ACCase subunit beta (AccD).

It localises to the cytoplasm. The enzyme catalyses N(6)-carboxybiotinyl-L-lysyl-[protein] + acetyl-CoA = N(6)-biotinyl-L-lysyl-[protein] + malonyl-CoA. It participates in lipid metabolism; malonyl-CoA biosynthesis; malonyl-CoA from acetyl-CoA: step 1/1. In terms of biological role, component of the acetyl coenzyme A carboxylase (ACC) complex. First, biotin carboxylase catalyzes the carboxylation of biotin on its carrier protein (BCCP) and then the CO(2) group is transferred by the carboxyltransferase to acetyl-CoA to form malonyl-CoA. The polypeptide is Acetyl-coenzyme A carboxylase carboxyl transferase subunit alpha (Bradyrhizobium sp. (strain BTAi1 / ATCC BAA-1182)).